The chain runs to 1219 residues: Disease resistance-like protein DSC1 (1219 aa).

Residues 9–176 (AEFDVFLSFR…EIAVDTFKKL (168 aa)) form the TIR domain. Residue Glu-83 is part of the active site. Residues 197–446 (LEKLLSWEDL…DIACFFRSEN (250 aa)) form the NB-ARC domain. ATP is bound at residue 216–222 (GMVGIGK). LRR repeat units lie at residues 468 to 493 (LVDKCLITLSDNRIEMHDMLQTMAKE), 538 to 563 (TDKIRGIFLDTSKLRAMRLSAKAFQG), 597 to 619 (PNELTYLHWHGYPLQSIPLDFDP), 620 to 642 (KNLVDLKLPHSQLEEIWDDEKDV), 665 to 689 (AHNLERLNLEGCTSLKKLPSTINCL), 690 to 713 (EKLIYLNLRDCTSLRSLPKGIKTQ), 733 to 757 (SENVEVLLLDGTVIKSLPESIQTFR), 759 to 780 (LALLNLKNCKKLKHLSSDLYKL), 804 to 827 (MESLEILLMDDTSITEMPKMMHLS), 854 to 877 (CSRLTDLYLSRCSLYKLPDNIGGL), and 878 to 899 (SSLQSLCLSGNNIENLPESFNQ).

Belongs to the disease resistance NB-LRR family. In terms of assembly, interacts with CAMTA3 and DSC2.

The catalysed reaction is NAD(+) + H2O = ADP-D-ribose + nicotinamide + H(+). Functionally, TIR-NB-LRR receptor-like protein involved in plant defense. Acts as a trigger of hypersensitive response (HR). Functions as a guard of CAMTA3, a negative regulator of immunity, during pathogen infection. The chain is Disease resistance-like protein DSC1 from Arabidopsis thaliana (Mouse-ear cress).